The primary structure comprises 404 residues: Tryptophan synthase beta chain (404 aa).

K98 carries the N6-(pyridoxal phosphate)lysine modification.

Belongs to the TrpB family. In terms of assembly, tetramer of two alpha and two beta chains. The cofactor is pyridoxal 5'-phosphate.

The enzyme catalyses (1S,2R)-1-C-(indol-3-yl)glycerol 3-phosphate + L-serine = D-glyceraldehyde 3-phosphate + L-tryptophan + H2O. It participates in amino-acid biosynthesis; L-tryptophan biosynthesis; L-tryptophan from chorismate: step 5/5. The beta subunit is responsible for the synthesis of L-tryptophan from indole and L-serine. The polypeptide is Tryptophan synthase beta chain (Rhodopseudomonas palustris (strain BisA53)).